The following is a 251-amino-acid chain: Imidazole glycerol phosphate synthase subunit HisF (251 aa).

Active-site residues include Asp11 and Asp130.

This sequence belongs to the HisA/HisF family. In terms of assembly, heterodimer of HisH and HisF.

It localises to the cytoplasm. It catalyses the reaction 5-[(5-phospho-1-deoxy-D-ribulos-1-ylimino)methylamino]-1-(5-phospho-beta-D-ribosyl)imidazole-4-carboxamide + L-glutamine = D-erythro-1-(imidazol-4-yl)glycerol 3-phosphate + 5-amino-1-(5-phospho-beta-D-ribosyl)imidazole-4-carboxamide + L-glutamate + H(+). It functions in the pathway amino-acid biosynthesis; L-histidine biosynthesis; L-histidine from 5-phospho-alpha-D-ribose 1-diphosphate: step 5/9. Its function is as follows. IGPS catalyzes the conversion of PRFAR and glutamine to IGP, AICAR and glutamate. The HisF subunit catalyzes the cyclization activity that produces IGP and AICAR from PRFAR using the ammonia provided by the HisH subunit. This chain is Imidazole glycerol phosphate synthase subunit HisF, found in Natranaerobius thermophilus (strain ATCC BAA-1301 / DSM 18059 / JW/NM-WN-LF).